A 571-amino-acid polypeptide reads, in one-letter code: MRTSKYLLSTLKETPNDAQVVSHQLMLRAGMIRPLASGLYNWLPTGLRVLKKVENIVREEMNKSGAIEVEMPVVQPAELWQESQRWEQYGPELLRFVDRGNRDFVLGPTHEEVITDLVHREVSSYKQLPLNLYQIQTKFRDEVRPRFGVMRGREFLMKDAYSFHTSKECLQNTYDVMYRTYNNIFTRLGLDFRAVQADTGSIGGSASHEFQVLAKSGEDDIVFSSNSDYAANIELAEAVAIGQRQAPSATMELVDTPNAKTINDLVEQFNLSVEKTVKTLIVKGANEGQPLIALIVRGDHELNEVKAQKLPEVADPLEFANEDEIKTKIGASIGSLGPVNLPIPAIIDRSVALMSDFSTGANIDGKHYFNVNWDRDVALPKVADLRNVVEGDPSPDGKGTLQIKRGIEVGHIFQLGTKYSEAMKATVQGEDGRPQTMIMGCYGIGVSRVVAATIEQCHDEKGIIWSSDEIAPFTVAIIPMNMYKSKNVQIFAEELYQSLLNKNVDVIFDDRKERPGVMFADMELIGVPHMIVIGEKNLEKGEIEYKNRRTGEKQIIAKEQVLDFLAQRVNA.

The protein belongs to the class-II aminoacyl-tRNA synthetase family. ProS type 1 subfamily. In terms of assembly, homodimer.

The protein resides in the cytoplasm. It catalyses the reaction tRNA(Pro) + L-proline + ATP = L-prolyl-tRNA(Pro) + AMP + diphosphate. Catalyzes the attachment of proline to tRNA(Pro) in a two-step reaction: proline is first activated by ATP to form Pro-AMP and then transferred to the acceptor end of tRNA(Pro). As ProRS can inadvertently accommodate and process non-cognate amino acids such as alanine and cysteine, to avoid such errors it has two additional distinct editing activities against alanine. One activity is designated as 'pretransfer' editing and involves the tRNA(Pro)-independent hydrolysis of activated Ala-AMP. The other activity is designated 'posttransfer' editing and involves deacylation of mischarged Ala-tRNA(Pro). The misacylated Cys-tRNA(Pro) is not edited by ProRS. The chain is Proline--tRNA ligase from Histophilus somni (strain 129Pt) (Haemophilus somnus).